The sequence spans 181 residues: Large ribosomal subunit protein uL10 (181 aa).

This sequence belongs to the universal ribosomal protein uL10 family. In terms of assembly, part of the ribosomal stalk of the 50S ribosomal subunit. The N-terminus interacts with L11 and the large rRNA to form the base of the stalk. The C-terminus forms an elongated spine to which L12 dimers bind in a sequential fashion forming a multimeric L10(L12)X complex.

In terms of biological role, forms part of the ribosomal stalk, playing a central role in the interaction of the ribosome with GTP-bound translation factors. This chain is Large ribosomal subunit protein uL10, found in Chloroflexus aggregans (strain MD-66 / DSM 9485).